Reading from the N-terminus, the 111-residue chain is uncharacterized protein (111 aa).

The stretch at 4–51 (LGQVKVLEEKVAKAVHLVQMLKEENAALRAEIDGRGKRITELEQLVLX) forms a coiled coil.

This is an uncharacterized protein from Treponema pallidum (strain Nichols).